The primary structure comprises 567 residues: Formate--tetrahydrofolate ligase (567 aa).

76–83 is a binding site for ATP; that stretch reads TPAGEGKT.

It belongs to the formate--tetrahydrofolate ligase family.

The catalysed reaction is (6S)-5,6,7,8-tetrahydrofolate + formate + ATP = (6R)-10-formyltetrahydrofolate + ADP + phosphate. It functions in the pathway one-carbon metabolism; tetrahydrofolate interconversion. This is Formate--tetrahydrofolate ligase from Sinorhizobium medicae (strain WSM419) (Ensifer medicae).